The chain runs to 468 residues: MEASHLQIYWHDSQPVYSLTFQKNSANDKLFTAGGDNKVRIWKLNRDENGQNGGVRKIESLDFLGSLTHHEQAINVIRFNSKGDVLASAGDDGQVLLWKQEDPNTQQESVVRPFGMDAETSEADENKEKWVVWKRLRGGSGATAAAEIYDLAWSPDNRNIVVACMDNSIRLFDVGAGMLVCGQSDHGHYVQGVAWDPLNQFILSQSADRSLHVYGVILSSAGVVTGLKLRSKIAKAELPCPGDVLRTNYLFHNETLPSFFRRCSISPCGGLVVIPSGVYKVAGDEVANCVYVYTRSGILNSAGGVKNRPAIRIPSLKKPALMAAFSPVFYETCQKSVLKLPYKLVFAIATTNEVLVYDTDVLEPLCVVGNIHYSPITDLAWSEDGSTLLISSTDGFCSYVSIDTETQFGSRIEPPAMHAEPLDTDESAVAAKNQREAGGIVNMLPVKKIPCNSSDSKKRRIHPTPVDL.

WD repeat units lie at residues 11-52 (HDSQ…NGQN), 69-108 (HHEQAINVIRFNSKGDVLASAGDDGQVLLWKQEDPNTQQE), 143-182 (TAAAEIYDLAWSPDNRNIVVACMDNSIRLFDVGAGMLVCG), 185-224 (DHGHYVQGVAWDPLNQFILSQSADRSLHVYGVILSSAGVV), and 371-413 (IHYS…SRIE).

It belongs to the WD repeat HIR1 family. In terms of assembly, component of chromatin assembly factor 1 (CAF-1), composed of MSI1/p50, CAC2/p60 and CAC1/p90. Interacts with RTT106.

The protein localises to the nucleus. Acts as a component of the histone chaperone complex chromatin assembly factor 1 (CAF-1), which assembles histone octamers onto replicating DNA. It performs the first step of the nucleosome assembly process, bringing newly synthesized histones H3 and H4 to replicating DNA; histones H2A/H2B can bind to this chromatin precursor subsequent to DNA replication to complete the histone octamer. Plays a role in the maintenance of heterochromatin. This is Chromatin assembly factor 1 subunit B (CAC2) from Saccharomyces cerevisiae (strain ATCC 204508 / S288c) (Baker's yeast).